A 68-amino-acid chain; its full sequence is Disintegrin EMS11A (68 aa).

The 65-residue stretch at Asn1–Lys65 folds into the Disintegrin domain. 4 cysteine pairs are disulfide-bonded: Cys6–Cys29, Cys20–Cys26, Cys25–Cys50, and Cys38–Cys57. The Cell attachment site; atypical (MLD) signature appears at Met42–Asp44.

The protein belongs to the disintegrin family. Dimeric disintegrin subfamily. Heterodimer; disulfide-linked. Expressed by the venom gland.

It localises to the secreted. Poor inhibitor of platelet aggregation. The disintegrin inhibits the adhesion of both the alpha-4/beta-1 (ITGA4/ITGB1) and the alpha-5/beta-1 (ITGA5/ITGB1) integrins to VCAM-1 and fibronectin respectively with almost the same degree of specificity. Inhibition on alpha-IIb/beta-3 (ITGA2B/ITGB3) is low. The chain is Disintegrin EMS11A from Echis multisquamatus (Central Asian sand viper).